Consider the following 1556-residue polypeptide: Lysine-specific demethylase 5C (1556 aa).

The 42-residue stretch at 14–55 (CPVFEPSWAEFRDPLGYIAKIRPIAEKSGICKIRPPADWQPP) folds into the JmjN domain. Positions 79–169 (TRVKLNYLDQ…IVYPYEMYQS (91 aa)) constitute an ARID domain. Residues 197–207 (LRQSVQPSKFN) show a composition bias toward polar residues. The disordered stretch occupies residues 197–227 (LRQSVQPSKFNSYGRRAKRLQPDPEPTEEDI). Glycyl lysine isopeptide (Lys-Gly) (interchain with G-Cter in SUMO2) cross-links involve residues K205, K229, K244, and K274. Positions 257-303 (LRKKDKEGPECPPTVVVKEESGGDVKVESTSPKTFLESKEELSHSPE) are disordered. Positions 273–283 (VKEESGGDVKV) are enriched in basic and acidic residues. S287 carries the post-translational modification Phosphoserine. K295 is covalently cross-linked (Glycyl lysine isopeptide (Lys-Gly) (interchain with G-Cter in SUMO2)). Phosphoserine occurs at positions 301 and 317. The PHD-type 1 zinc finger occupies 324-374 (SYVCRMCSRGDEDDKLLLCDGCDDNYHIFCLLPPLPEIPKGVWRCPKCVMA). One can recognise a JmjC domain in the interval 468 to 634 (EYATSGWNLN…AGRQCIEHYR (167 aa)). Positions 514, 517, and 602 each coordinate Fe cation. 2 positions are modified to phosphoserine: S893 and S897. K1127 participates in a covalent cross-link: Glycyl lysine isopeptide (Lys-Gly) (interchain with G-Cter in SUMO2). A PHD-type 2 zinc finger spans residues 1185-1250 (TSVCVCGQVP…KFLCPLCMRS (66 aa)). 2 disordered regions span residues 1315 to 1362 (LQAE…SPEK) and 1441 to 1556 (ERHG…QQQL). Residues 1335–1345 (PLREGSGKDMP) show a composition bias toward basic and acidic residues. Residue S1359 is modified to Phosphoserine. The span at 1445 to 1460 (SRARGRALERRRRRKV) shows a compositional bias: basic residues. Over residues 1461-1478 (DRGGEGDDPAREELEPKR) the composition is skewed to basic and acidic residues. Residues 1485-1500 (EAEEAQEEEELEEETG) are compositionally biased toward acidic residues. Composition is skewed to polar residues over residues 1513-1522 (SPSTQENQNG) and 1530-1540 (SGPSAPFSTLS). Residues 1541 to 1556 (PQLHVPCPQQPPQQQL) are compositionally biased toward low complexity.

Belongs to the JARID1 histone demethylase family. As to quaternary structure, part of two distinct complexes, one containing E2F6, and the other containing REST. Interacts with ZMYND8. The cofactor is Fe(2+).

It is found in the nucleus. The enzyme catalyses N(6),N(6),N(6)-trimethyl-L-lysyl(4)-[histone H3] + 3 2-oxoglutarate + 3 O2 = L-lysyl(4)-[histone H3] + 3 formaldehyde + 3 succinate + 3 CO2. Histone demethylase that specifically demethylates 'Lys-4' of histone H3, thereby playing a central role in histone code. Does not demethylate histone H3 'Lys-9', H3 'Lys-27', H3 'Lys-36', H3 'Lys-79' or H4 'Lys-20'. Demethylates trimethylated and dimethylated but not monomethylated H3 'Lys-4'. Participates in transcriptional repression of neuronal genes by recruiting histone deacetylases and REST at neuron-restrictive silencer elements. Represses the CLOCK-BMAL1 heterodimer-mediated transcriptional activation of the core clock component PER2. The sequence is that of Lysine-specific demethylase 5C (KDM5C) from Canis lupus familiaris (Dog).